The following is a 750-amino-acid chain: Photosystem I P700 chlorophyll a apoprotein A1 (750 aa).

A run of 8 helical transmembrane segments spans residues 70 to 93, 156 to 179, 195 to 219, 291 to 309, 346 to 369, 385 to 411, 433 to 455, and 531 to 549; these read VFSAHFGQLSIIFLWLSGMYFHGA, LYCTAIGALVFAALMLFAGWFHYH, LNHHLAGLLGLGSLSWAGHQVHVSL, IAHHHLAIAILFLIAGHMY, WHAQLSLNLAMLGSLTIIVAHHMY, LSLFTHHMWIGGFLIVGAAAHAAIFMV, AIISHLNWVCIFLGFHSFGLYIH, and FLVHHIHAFTIHVTVLILL. 2 residues coordinate [4Fe-4S] cluster: Cys573 and Cys582. Transmembrane regions (helical) follow at residues 589–610 and 664–686; these read HVFLGLFWMYNAISVVIFHFSW and LSAYGLFFLGAHFVWAFSLMFLF. His675 is a chlorophyll a' binding site. Residues Met683 and Tyr691 each contribute to the chlorophyll a site. Trp692 contributes to the phylloquinone binding site. Residues 724-744 traverse the membrane as a helical segment; sequence AVGVTHYLLGGIATTWAFFLA.

The protein belongs to the PsaA/PsaB family. The PsaA/B heterodimer binds the P700 chlorophyll special pair and subsequent electron acceptors. PSI consists of a core antenna complex that captures photons, and an electron transfer chain that converts photonic excitation into a charge separation. The eukaryotic PSI reaction center is composed of at least 11 subunits. The cofactor is P700 is a chlorophyll a/chlorophyll a' dimer, A0 is one or more chlorophyll a, A1 is one or both phylloquinones and FX is a shared 4Fe-4S iron-sulfur center..

It is found in the plastid. The protein localises to the chloroplast thylakoid membrane. It carries out the reaction reduced [plastocyanin] + hnu + oxidized [2Fe-2S]-[ferredoxin] = oxidized [plastocyanin] + reduced [2Fe-2S]-[ferredoxin]. Functionally, psaA and PsaB bind P700, the primary electron donor of photosystem I (PSI), as well as the electron acceptors A0, A1 and FX. PSI is a plastocyanin-ferredoxin oxidoreductase, converting photonic excitation into a charge separation, which transfers an electron from the donor P700 chlorophyll pair to the spectroscopically characterized acceptors A0, A1, FX, FA and FB in turn. Oxidized P700 is reduced on the lumenal side of the thylakoid membrane by plastocyanin. This is Photosystem I P700 chlorophyll a apoprotein A1 from Olimarabidopsis pumila (Dwarf rocket).